We begin with the raw amino-acid sequence, 836 residues long: Protein IWS1 homolog A (836 aa).

The tract at residues 1-542 is disordered; the sequence is MEADNYSPEH…DMKSGKMGDY (542 aa). Basic and acidic residues-rich tracts occupy residues 20-36, 43-122, 133-148, 157-186, 206-218, 288-309, 370-386, and 458-469; these read QDER…EQRS, HQSE…DRSP, EPVR…DVPR, DERH…DKAP, DSKD…HAAS, VPVK…KASD, RSSE…KKLQ, and ERKSKTETKSAD. Residues 476-485 show a composition bias toward acidic residues; it reads SDSENEEENL. Residues 533 to 542 are compositionally biased toward basic and acidic residues; it reads DMKSGKMGDY. In terms of domain architecture, TFIIS N-terminal spans 631 to 709; the sequence is SAIKEWLTPL…NEWSRPIFGL (79 aa). The segment at 714–746 is disordered; that stretch reads KGMTREEREQRDIEQMPQRRRMSSSGGQTPRRD. A compositionally biased stretch (basic and acidic residues) spans 716-727; that stretch reads MTREEREQRDIE.

Belongs to the IWS1 family.

The protein localises to the nucleus. Functionally, transcription factor which plays a key role in defining the composition of the RNA polymerase II (RNAPII) elongation complex and in modulating the production of mature mRNA transcripts. The chain is Protein IWS1 homolog A (iws1-a) from Xenopus laevis (African clawed frog).